The sequence spans 96 residues: Uteroglobin (96 aa).

Residues 1–21 form the signal peptide; sequence MKIAITITVVMLSICCSSASS.

Belongs to the secretoglobin family. As to quaternary structure, antiparallel homodimer; disulfide-linked. Interaction with LMBR1L is controversial. In terms of tissue distribution, club cells (nonciliated cells of the surface epithelium of the pulmonary airways).

The protein localises to the secreted. In terms of biological role, binds phosphatidylcholine, phosphatidylinositol, polychlorinated biphenyls (PCB) and weakly progesterone, potent inhibitor of phospholipase A2. This chain is Uteroglobin (Scgb1a1), found in Mus musculus (Mouse).